Reading from the N-terminus, the 548-residue chain is DNA ligase (548 aa).

Glu252 contacts ATP. The active-site N6-AMP-lysine intermediate is the Lys254. The ATP site is built by Arg259, Arg274, Glu303, Phe343, Arg414, and Lys420.

It belongs to the ATP-dependent DNA ligase family. The cofactor is Mg(2+).

It carries out the reaction ATP + (deoxyribonucleotide)n-3'-hydroxyl + 5'-phospho-(deoxyribonucleotide)m = (deoxyribonucleotide)n+m + AMP + diphosphate.. Functionally, DNA ligase that seals nicks in double-stranded DNA during DNA replication, DNA recombination and DNA repair. This chain is DNA ligase, found in Natronomonas pharaonis (strain ATCC 35678 / DSM 2160 / CIP 103997 / JCM 8858 / NBRC 14720 / NCIMB 2260 / Gabara) (Halobacterium pharaonis).